We begin with the raw amino-acid sequence, 251 residues long: NADPH-dependent oxidoreductase (251 aa).

This sequence belongs to the flavin oxidoreductase frp family. FMN is required as a cofactor.

Functionally, reduces FMN, organic nitro compounds and disulfide DTNB. Involved in maintenance of the cellular redox state and the disulfide stress response. In Staphylococcus aureus (strain Mu50 / ATCC 700699), this protein is NADPH-dependent oxidoreductase (nfrA).